The chain runs to 90 residues: MKLLGFFLSWVSVCAIVSASEEGHIYCGRYLAYKMADLCWRAGFEKRSVAHYAGYGWPLLPSLSEERGKRGIADECCLQPCTNDVLLSYC.

The signal sequence occupies residues 1-18 (MKLLGFFLSWVSVCAIVS). Cystine bridges form between Cys-27–Cys-77, Cys-39–Cys-90, and Cys-76–Cys-81. Residues 48-68 (SVAHYAGYGWPLLPSLSEERG) constitute a propeptide, c peptide like.

The protein belongs to the insulin family. Heterodimer of a B chain and an A chain linked by two disulfide bonds.

The protein resides in the secreted. Functionally, brain peptide responsible for activation of prothoracic glands to produce ecdysone in insects. The sequence is that of Bombyxin D-1 (BBXD1) from Bombyx mori (Silk moth).